The following is a 92-amino-acid chain: Calitoxin (92 aa).

Positions 1 to 20 are cleaved as a signal peptide; it reads MKTQVLVVLVLCVVFCLAES. Positions 21–42 are excised as a propeptide; it reads RNSMTSEERGLVSLMRQRDDIA. Cystine bridges form between Cys-47–Cys-86, Cys-49–Cys-77, and Cys-67–Cys-87.

It belongs to the sea anemone sodium channel inhibitory toxin family. Expressed both outside and in acontia, a specialised envenomation structure laden with batteries of venom-containing nematocysts found only in the superfamily Metridioidea.

The protein resides in the secreted. Its subcellular location is the nematocyst. In terms of biological role, in neuromuscular preparation of crustaceans, the toxin increased neurotransmitter release, causing repetitive firing of the axons. May affect sodium channels (Nav). The polypeptide is Calitoxin (Calliactis polypus (Hermit crab anemone)).